Reading from the N-terminus, the 135-residue chain is MRVPIITTLLTLALTGLSQAASLGVETTHGVECNRKTTKGDTVKMHYRGTLAEDGSQFDASYDRGTPFKFKLGAGRVIKGWDEGLLDMCVGEKRTLTIPPEYGYGDRGIGPIPGGATLIFQTELLEIEGVPKDEL.

An N-terminal signal peptide occupies residues 1-20 (MRVPIITTLLTLALTGLSQA). Positions 40–128 (GDTVKMHYRG…IFQTELLEIE (89 aa)) constitute a PPIase FKBP-type domain. The Prevents secretion from ER signature appears at 132 to 135 (KDEL).

It belongs to the FKBP-type PPIase family. FKBP2 subfamily.

It localises to the endoplasmic reticulum. It carries out the reaction [protein]-peptidylproline (omega=180) = [protein]-peptidylproline (omega=0). Its activity is regulated as follows. Inhibited by both FK506 and rapamycin. In terms of biological role, PPIases accelerate the folding of proteins. It catalyzes the cis-trans isomerization of proline imidic peptide bonds in oligopeptides. The sequence is that of FK506-binding protein 2 (fkbB) from Emericella nidulans (strain FGSC A4 / ATCC 38163 / CBS 112.46 / NRRL 194 / M139) (Aspergillus nidulans).